A 334-amino-acid chain; its full sequence is Nucleoid-associated protein ESA_01050 (334 aa).

The protein belongs to the YejK family.

It is found in the cytoplasm. It localises to the nucleoid. This Cronobacter sakazakii (strain ATCC BAA-894) (Enterobacter sakazakii) protein is Nucleoid-associated protein ESA_01050.